Reading from the N-terminus, the 253-residue chain is MRQIIIAGNWKMNTTLSEACTLVQSMKCELERIEGIEKIICPPFISLYPIKTILENSSIKLGAQNLFYQEKGAYTGEISPLMLKELCQYVIIGHSERRAYFGETGQVVNQKIKAALQAGLLPIVCVGEKPEENENGQTRQVLETQLKEALDGLNLSCIIIAYEPIWAIGTGKAATASEANSAIGYIRRVLGDTLGNAAAQTSPILYGGSVNEKNITEILSQTNIDGALVGGASLKAESFVSICRQAAVIQNKH.

9-11 (NWK) provides a ligand contact to substrate. The Electrophile role is filled by His-94. Catalysis depends on Glu-163, which acts as the Proton acceptor. Residues Gly-169, Ser-209, and 230-231 (GG) each bind substrate.

It belongs to the triosephosphate isomerase family. As to quaternary structure, homodimer.

It is found in the cytoplasm. It catalyses the reaction D-glyceraldehyde 3-phosphate = dihydroxyacetone phosphate. It functions in the pathway carbohydrate biosynthesis; gluconeogenesis. The protein operates within carbohydrate degradation; glycolysis; D-glyceraldehyde 3-phosphate from glycerone phosphate: step 1/1. Functionally, involved in the gluconeogenesis. Catalyzes stereospecifically the conversion of dihydroxyacetone phosphate (DHAP) to D-glyceraldehyde-3-phosphate (G3P). This chain is Triosephosphate isomerase, found in Dehalococcoides mccartyi (strain CBDB1).